The primary structure comprises 422 residues: Serine--tRNA ligase (422 aa).

Residue 231-233 (TAE) participates in L-serine binding. 261–263 (RSE) serves as a coordination point for ATP. E284 contacts L-serine. 348-351 (EISS) lines the ATP pocket. S383 lines the L-serine pocket.

The protein belongs to the class-II aminoacyl-tRNA synthetase family. Type-1 seryl-tRNA synthetase subfamily. In terms of assembly, homodimer. The tRNA molecule binds across the dimer.

The protein localises to the cytoplasm. The enzyme catalyses tRNA(Ser) + L-serine + ATP = L-seryl-tRNA(Ser) + AMP + diphosphate + H(+). It catalyses the reaction tRNA(Sec) + L-serine + ATP = L-seryl-tRNA(Sec) + AMP + diphosphate + H(+). It functions in the pathway aminoacyl-tRNA biosynthesis; selenocysteinyl-tRNA(Sec) biosynthesis; L-seryl-tRNA(Sec) from L-serine and tRNA(Sec): step 1/1. Functionally, catalyzes the attachment of serine to tRNA(Ser). Is also able to aminoacylate tRNA(Sec) with serine, to form the misacylated tRNA L-seryl-tRNA(Sec), which will be further converted into selenocysteinyl-tRNA(Sec). The sequence is that of Serine--tRNA ligase from Mycoplasmopsis agalactiae (strain NCTC 10123 / CIP 59.7 / PG2) (Mycoplasma agalactiae).